We begin with the raw amino-acid sequence, 227 residues long: UPF0688 protein C1orf174 homolog (227 aa).

2 disordered regions span residues 1–122 (MRKR…VSDL) and 207–227 (AKEE…EGNI). Residues 47–63 (TEKESSKKLRKDEKGPV) show a composition bias toward basic and acidic residues. Composition is skewed to polar residues over residues 77–104 (AASN…NGTR) and 113–122 (RLPSSPVSDL).

Belongs to the UPF0688 family.

Its subcellular location is the nucleus. This is UPF0688 protein C1orf174 homolog from Xenopus tropicalis (Western clawed frog).